Reading from the N-terminus, the 333-residue chain is Protein VTE6, chloroplastic (333 aa).

The transit peptide at Met-1 to Ala-65 directs the protein to the chloroplast. The next 6 membrane-spanning stretches (helical) occupy residues Leu-94 to Ala-114, Ala-126 to Thr-146, Val-171 to Gly-191, Thr-248 to Ile-268, Ala-274 to Phe-294, and Val-307 to Ile-327.

This sequence belongs to the TMEM19 family.

It localises to the plastid. It is found in the chloroplast membrane. The catalysed reaction is phytyl phosphate + a ribonucleoside 5'-triphosphate = phytyl diphosphate + a ribonucleoside 5'-diphosphate. The enzyme catalyses phytyl phosphate + CTP = phytyl diphosphate + CDP. It participates in cofactor biosynthesis; tocopherol biosynthesis. Phytyl-phosphate kinase catalyzing the conversion of phytyl-monophosphate to phytyl-diphosphate. Involved in the activation and reutilization of phytol from chlorophyll degradation in plant metabolism, including tocopherol (vitamin E) biosynthesis. Involved in the biosynthesis of phylloquinone (vitamin K), which is required for the photosystem I (PSI) complex stability. The polypeptide is Protein VTE6, chloroplastic (Arabidopsis thaliana (Mouse-ear cress)).